The primary structure comprises 311 residues: Fructose-1,6-bisphosphatase class 1 (311 aa).

Mg(2+)-binding residues include glutamate 90, aspartate 110, leucine 112, and aspartate 113. Residues 113–116 (DGSS), tyrosine 221, and lysine 251 each bind substrate. Glutamate 257 is a binding site for Mg(2+).

The protein belongs to the FBPase class 1 family. As to quaternary structure, homotetramer. It depends on Mg(2+) as a cofactor.

The protein resides in the cytoplasm. The enzyme catalyses beta-D-fructose 1,6-bisphosphate + H2O = beta-D-fructose 6-phosphate + phosphate. The protein operates within carbohydrate biosynthesis; gluconeogenesis. This Methanospirillum hungatei JF-1 (strain ATCC 27890 / DSM 864 / NBRC 100397 / JF-1) protein is Fructose-1,6-bisphosphatase class 1.